Here is a 251-residue protein sequence, read N- to C-terminus: Triosephosphate isomerase (251 aa).

9-11 is a binding site for substrate; sequence NWK. The active-site Electrophile is the histidine 94. Glutamate 166 (proton acceptor) is an active-site residue. Substrate-binding positions include glycine 172, serine 211, and 232–233; that span reads GG.

This sequence belongs to the triosephosphate isomerase family. As to quaternary structure, homodimer.

The protein resides in the cytoplasm. It carries out the reaction D-glyceraldehyde 3-phosphate = dihydroxyacetone phosphate. Its pathway is carbohydrate biosynthesis; gluconeogenesis. It functions in the pathway carbohydrate degradation; glycolysis; D-glyceraldehyde 3-phosphate from glycerone phosphate: step 1/1. Involved in the gluconeogenesis. Catalyzes stereospecifically the conversion of dihydroxyacetone phosphate (DHAP) to D-glyceraldehyde-3-phosphate (G3P). This chain is Triosephosphate isomerase, found in Xanthomonas oryzae pv. oryzae (strain MAFF 311018).